The chain runs to 239 residues: Ribosomal RNA small subunit methyltransferase G (239 aa).

S-adenosyl-L-methionine contacts are provided by residues glycine 77, phenylalanine 82, 128–129, and arginine 147; that span reads AE. Residues 215-239 are disordered; the sequence is IRKTKSTPKKYPRKPGTPNKSPIEG. A compositionally biased stretch (basic residues) spans 216-227; sequence RKTKSTPKKYPR.

It belongs to the methyltransferase superfamily. RNA methyltransferase RsmG family.

It localises to the cytoplasm. In terms of biological role, specifically methylates the N7 position of guanine in position 535 of 16S rRNA. This Bacillus velezensis (strain DSM 23117 / BGSC 10A6 / LMG 26770 / FZB42) (Bacillus amyloliquefaciens subsp. plantarum) protein is Ribosomal RNA small subunit methyltransferase G.